Reading from the N-terminus, the 384-residue chain is Spermidine/putrescine import ATP-binding protein PotA (384 aa).

Residues 6–238 (ITFNNVSKTF…PINHFVANFI (233 aa)) enclose the ABC transporter domain. 40–47 (GASGSGKS) provides a ligand contact to ATP.

Belongs to the ABC transporter superfamily. Spermidine/putrescine importer (TC 3.A.1.11.1) family. The complex is composed of two ATP-binding proteins (PotA), two transmembrane proteins (PotB and PotC) and a solute-binding protein (PotD).

The protein localises to the cell membrane. The catalysed reaction is ATP + H2O + polyamine-[polyamine-binding protein]Side 1 = ADP + phosphate + polyamineSide 2 + [polyamine-binding protein]Side 1.. Part of the ABC transporter complex PotABCD involved in spermidine/putrescine import. Responsible for energy coupling to the transport system. The chain is Spermidine/putrescine import ATP-binding protein PotA from Streptococcus pyogenes serotype M18 (strain MGAS8232).